The primary structure comprises 201 residues: Glycerol-3-phosphate acyltransferase (201 aa).

Helical transmembrane passes span Ala-10–Ile-30, Pro-59–Ala-79, Ala-87–Phe-107, Phe-116–Leu-136, and Ile-161–Ile-181.

The protein belongs to the PlsY family. Probably interacts with PlsX.

Its subcellular location is the cell inner membrane. The catalysed reaction is an acyl phosphate + sn-glycerol 3-phosphate = a 1-acyl-sn-glycero-3-phosphate + phosphate. The protein operates within lipid metabolism; phospholipid metabolism. Catalyzes the transfer of an acyl group from acyl-phosphate (acyl-PO(4)) to glycerol-3-phosphate (G3P) to form lysophosphatidic acid (LPA). This enzyme utilizes acyl-phosphate as fatty acyl donor, but not acyl-CoA or acyl-ACP. This Cereibacter sphaeroides (strain ATCC 17029 / ATH 2.4.9) (Rhodobacter sphaeroides) protein is Glycerol-3-phosphate acyltransferase.